We begin with the raw amino-acid sequence, 421 residues long: Serine--tRNA ligase (421 aa).

229-231 provides a ligand contact to L-serine; the sequence is TSE. 260 to 262 is an ATP binding site; sequence RRE. Residue E283 participates in L-serine binding. ATP is bound at residue 347-350; sequence EISS. S381 contributes to the L-serine binding site.

This sequence belongs to the class-II aminoacyl-tRNA synthetase family. Type-1 seryl-tRNA synthetase subfamily. As to quaternary structure, homodimer. The tRNA molecule binds across the dimer.

Its subcellular location is the cytoplasm. The catalysed reaction is tRNA(Ser) + L-serine + ATP = L-seryl-tRNA(Ser) + AMP + diphosphate + H(+). It carries out the reaction tRNA(Sec) + L-serine + ATP = L-seryl-tRNA(Sec) + AMP + diphosphate + H(+). The protein operates within aminoacyl-tRNA biosynthesis; selenocysteinyl-tRNA(Sec) biosynthesis; L-seryl-tRNA(Sec) from L-serine and tRNA(Sec): step 1/1. In terms of biological role, catalyzes the attachment of serine to tRNA(Ser). Is also able to aminoacylate tRNA(Sec) with serine, to form the misacylated tRNA L-seryl-tRNA(Sec), which will be further converted into selenocysteinyl-tRNA(Sec). The protein is Serine--tRNA ligase of Fusobacterium nucleatum subsp. nucleatum (strain ATCC 25586 / DSM 15643 / BCRC 10681 / CIP 101130 / JCM 8532 / KCTC 2640 / LMG 13131 / VPI 4355).